An 856-amino-acid chain; its full sequence is Dynamin-1 (856 aa).

In terms of domain architecture, Dynamin-type G spans aspartate 28–proline 294. The G1 motif stretch occupies residues glycine 38 to serine 45. The GDP site is built by serine 41, glycine 43, lysine 44, serine 45, serine 46, arginine 59, and glycine 60. Residues valine 64–arginine 66 are G2 motif. Tyrosine 80 carries the phosphotyrosine modification. The residue at position 125 (tyrosine 125) is a 3'-nitrotyrosine; alternate. Position 125 is a phosphotyrosine; alternate (tyrosine 125). Residues aspartate 136–glycine 139 are G3 motif. Positions threonine 205–aspartate 208 are G4 motif. Lysine 206, aspartate 208, aspartate 211, asparagine 236, arginine 237, and glutamine 239 together coordinate GDP. The interval valine 235–serine 238 is G5 motif. Residues serine 306 and serine 347 each carry the phosphoserine modification. A Phosphotyrosine modification is found at tyrosine 354. Position 512 is a phosphoserine (serine 512). A PH domain is found at leucine 519–valine 625. In terms of domain architecture, GED spans valine 659–valine 750. The segment at valine 750–serine 856 is disordered. Polar residues predominate over residues leucine 763–proline 781. Residues serine 774 and serine 778 each carry the phosphoserine modification. Arginine 796 carries the omega-N-methylarginine modification. Position 822 is a phosphoserine (serine 822). A compositionally biased stretch (pro residues) spans proline 825 to proline 844.

Belongs to the TRAFAC class dynamin-like GTPase superfamily. Dynamin/Fzo/YdjA family. Homodimer; homodimerization is mediated by the dynamin-type G domain which promotes assembly-stimulated GTPase activity. Homo-tetramer formed from two dimers in the absence of lipid. Oligomerizes into a helical polymer that self-assembles around the vesicle membrane, when associated to the menbrane through lipid binding. Interacts (via C-terminal proline-rich domain (PRD)) with SNX9 (via SH3 domain); this interaction allows regulation of DNM1 self-assembly during late stages of endocytic vesicle formation and supports DNM1's early functions in accelerating clathrin-coated pits (CCPs) maturation in non neuronals cell. Interacts (via C-terminal proline-rich domain (PRD)) with MYO1E (via SH3 domain); this interaction regulates receptor-mediated endocytosis. Interacts with SNX33 (via SH3 domain); this interaction decreases DNM1-dependent endocytosis. Interacts with DIAPH1. Interacts with GRB2 (via SH3 domain); this interaction mediates disassembly of DNM1 polymers, therefore modulates self-assembly. Forms a complex with BIN1 (via SH3 domain) and SH3GL2 (via SH3 domain). Forms a complex with SH3GL2 (via SH3 domain) and AMPH (via SH3 domain). Forms a complex with SH3GL2 (via SH3 domain) and SYNJ1. Interacts with AMPH. Interacts (via C-terminal proline-rich domain (PRD)) with SYT1; this interaction facilitates vesicle fission during clathrin-mediated endocytosis (CME). Interacts (via C-terminal proline-rich domain (PRD)) with PLCG1 (via SH3 domain); this interaction stimulates the release of GDP from DNM1 and enhances DNM1-dependent endocytosis. Interacts with SNPH; this interaction inhibits the binding of DNM1 to AMPH and DNM1-receptor-mediated endocytosis. Interacts with CAV1. Interacts with SH3GLB1 (via SH3 domain). Interacts with PACSIN1 (via SH3 domain), PACSIN2 (via SH3 domain) and PACSIN3 (via SH3 domain). Interacts with UNC119; this interaction decreases DNM1's GTPase activity and affects DNM1's interaction with AMPH. Interacts with AMPH. Interacts (GTP-bound form) with DNAJC6; this interaction allows clathrin-coated vesicle (CCV) formation at the plasma membrane. In terms of processing, phosphorylation at Ser-774 by GSK3B/GSK3-beta leads to inactivation of receptor-mediated endocytosis in non-neuronal cells. Dephosphorylation at Ser-774, through the EGFR downstream signaling, leads to activation and regulates early stages of clathrin-mediated endocytosis (CME).

The protein resides in the cell membrane. Its subcellular location is the membrane. It is found in the clathrin-coated pit. The protein localises to the cytoplasmic vesicle. It localises to the presynapse. The protein resides in the secretory vesicle. Its subcellular location is the chromaffin granule. The catalysed reaction is GTP + H2O = GDP + phosphate + H(+). Catalyzes the hydrolysis of GTP and utilizes this energy to mediate vesicle scission and participates in many forms of endocytosis, such as clathrin-mediated endocytosis or synaptic vesicle endocytosis as well as rapid endocytosis (RE). Associates to the membrane, through lipid binding, and self-assembles into rings and stacks of interconnected rings through oligomerization to form a helical polymer around the vesicle membrane leading to constriction of invaginated coated pits around their necks. Self-assembly of the helical polymer induces membrane tubules narrowing until the polymer reaches a length sufficient to trigger GTP hydrolysis. Depending on the curvature imposed on the tubules, membrane detachment from the helical polymer upon GTP hydrolysis can cause spontaneous hemifission followed by complete fission. May play a role in regulating early stages of clathrin-mediated endocytosis in non-neuronal cells through its activation by dephosphorylation via the signaling downstream of EGFR. Controls vesicle size at a step before fission, during formation of membrane pits, at hippocampal synapses. Controls plastic adaptation of the synaptic vesicle recycling machinery to high levels of activity. Mediates rapid endocytosis (RE), a Ca(2+)-dependent and clathrin- and K(+)-independent process in chromaffin cells. Microtubule-associated force-producing protein involved in producing microtubule bundles and able to bind and hydrolyze GTP. Through its interaction with DNAJC6, acts during the early steps of clathrin-coated vesicle (CCV) formation. The chain is Dynamin-1 from Bos taurus (Bovine).